We begin with the raw amino-acid sequence, 217 residues long: Urease accessory protein UreG (217 aa).

Positions 1 to 18 are enriched in basic residues; it reads MNAPHHPAHSTVRTKKLP. The disordered stretch occupies residues 1–24; sequence MNAPHHPAHSTVRTKKLPPLRVGV. 26 to 33 provides a ligand contact to GTP; it reads GPVGSGKT.

The protein belongs to the SIMIBI class G3E GTPase family. UreG subfamily. Homodimer. UreD, UreF and UreG form a complex that acts as a GTP-hydrolysis-dependent molecular chaperone, activating the urease apoprotein by helping to assemble the nickel containing metallocenter of UreC. The UreE protein probably delivers the nickel.

It is found in the cytoplasm. Facilitates the functional incorporation of the urease nickel metallocenter. This process requires GTP hydrolysis, probably effectuated by UreG. The protein is Urease accessory protein UreG of Paraburkholderia xenovorans (strain LB400).